Consider the following 157-residue polypeptide: Deoxyuridine 5'-triphosphate nucleotidohydrolase (157 aa).

Residues serine 63, glycine 76, aspartate 79, tyrosine 82, lysine 87, arginine 132, phenylalanine 137, and glycine 138 each contribute to the dUMP site. The interval 125-157 (NDLESTERGAGGFGSTGINDEKKRKLDEAEAKE) is disordered. A compositionally biased stretch (basic and acidic residues) spans 143 to 157 (NDEKKRKLDEAEAKE).

Belongs to the dUTPase family. As to quaternary structure, homotrimer. Mg(2+) serves as cofactor.

The enzyme catalyses dUTP + H2O = dUMP + diphosphate + H(+). It functions in the pathway pyrimidine metabolism; dUMP biosynthesis; dUMP from dCTP (dUTP route): step 2/2. Functionally, involved in nucleotide metabolism via production of dUMP, the immediate precursor of thymidine nucleotides, and decreases the intracellular concentration of dUTP so that uracil cannot be incorporated into DNA. This chain is Deoxyuridine 5'-triphosphate nucleotidohydrolase (DUT1), found in Yarrowia lipolytica (strain CLIB 122 / E 150) (Yeast).